The primary structure comprises 197 residues: ADP-ribosylation factor-like protein 16 (197 aa).

GTP contacts are provided by residues Gly-30–Thr-37, Glu-82–Cys-86, and Asn-139–Asp-142.

Belongs to the small GTPase superfamily. Arf family. In terms of assembly, interacts with RIGI; this interaction is GTP-dependent and induced upon viral infection; this interaction suppresses the RNA sensing activity of RIGI.

Its subcellular location is the cytoplasm. In terms of biological role, may suppress the RNA sensing activity of RIGI in a GTP-dependent. This chain is ADP-ribosylation factor-like protein 16, found in Homo sapiens (Human).